The sequence spans 707 residues: Polyribonucleotide nucleotidyltransferase (707 aa).

Residues Asp-485 and Asp-491 each coordinate Mg(2+). A KH domain is found at 552–611 (PRIHTMKINSDKIKDVIGKGGAVIRALTEETGTTIEIEDDGTIKIAATEGAAAKEAIRRI). Positions 621-689 (GRIYTGKVMR…RQGRIRLSMK (69 aa)) constitute an S1 motif domain.

Belongs to the polyribonucleotide nucleotidyltransferase family. Component of the RNA degradosome, which is a multiprotein complex involved in RNA processing and mRNA degradation. It depends on Mg(2+) as a cofactor.

The protein resides in the cytoplasm. It catalyses the reaction RNA(n+1) + phosphate = RNA(n) + a ribonucleoside 5'-diphosphate. Involved in mRNA degradation. Catalyzes the phosphorolysis of single-stranded polyribonucleotides processively in the 3'- to 5'-direction. This is Polyribonucleotide nucleotidyltransferase from Photobacterium profundum (strain SS9).